Consider the following 284-residue polypeptide: Ubiquinone biosynthesis protein COQ4, mitochondrial (284 aa).

Positions 165, 166, 169, and 181 each coordinate Zn(2+).

This sequence belongs to the COQ4 family. As to quaternary structure, component of a multi-subunit COQ enzyme complex, composed of at least COQ3, COQ4, COQ5, COQ6, COQ7 and COQ9. Requires Zn(2+) as cofactor.

It is found in the mitochondrion inner membrane. It catalyses the reaction a 4-hydroxy-3-methoxy-5-(all-trans-polyprenyl)benzoate + H(+) = a 2-methoxy-6-(all-trans-polyprenyl)phenol + CO2. It functions in the pathway cofactor biosynthesis; ubiquinone biosynthesis. Its function is as follows. Lyase that catalyzes the C1-decarboxylation of 4-hydroxy-3-methoxy-5-(all-trans-polyprenyl)benzoic acid into 2-methoxy-6-(all-trans-polyprenyl)phenol during ubiquinone biosynthesis. The sequence is that of Ubiquinone biosynthesis protein COQ4, mitochondrial from Blastomyces gilchristii (strain SLH14081) (Blastomyces dermatitidis).